The sequence spans 658 residues: UvrABC system protein B (658 aa).

In terms of domain architecture, Helicase ATP-binding spans 26-414 (AGLKKGLKHQ…PDVIEQIIRP (389 aa)). Position 39-46 (39-46 (GATGTGKT)) interacts with ATP. The short motif at 92–115 (YYDYYQPEAYVPQSDTYIEKDASI) is the Beta-hairpin element. The Helicase C-terminal domain maps to 430-592 (QIDDLMDEIN…ITPKTIKKEI (163 aa)). The UVR domain maps to 622–658 (DVFIEGMEHEMKEAAKALDFERAAELRDALLEIKAEG).

Belongs to the UvrB family. As to quaternary structure, forms a heterotetramer with UvrA during the search for lesions. Interacts with UvrC in an incision complex.

The protein resides in the cytoplasm. Its function is as follows. The UvrABC repair system catalyzes the recognition and processing of DNA lesions. A damage recognition complex composed of 2 UvrA and 2 UvrB subunits scans DNA for abnormalities. Upon binding of the UvrA(2)B(2) complex to a putative damaged site, the DNA wraps around one UvrB monomer. DNA wrap is dependent on ATP binding by UvrB and probably causes local melting of the DNA helix, facilitating insertion of UvrB beta-hairpin between the DNA strands. Then UvrB probes one DNA strand for the presence of a lesion. If a lesion is found the UvrA subunits dissociate and the UvrB-DNA preincision complex is formed. This complex is subsequently bound by UvrC and the second UvrB is released. If no lesion is found, the DNA wraps around the other UvrB subunit that will check the other stand for damage. In Listeria monocytogenes serotype 4b (strain F2365), this protein is UvrABC system protein B.